The following is a 307-amino-acid chain: Small ribosomal subunit biogenesis GTPase RsgA (307 aa).

In terms of domain architecture, CP-type G spans 64–229 (KNSLIRPSIA…IADTPGFSSL (166 aa)). GTP-binding positions include 113–116 (SKLD) and 172–180 (GQTGAGKTT). Cys-253, Cys-258, His-260, and Cys-266 together coordinate Zn(2+).

The protein belongs to the TRAFAC class YlqF/YawG GTPase family. RsgA subfamily. As to quaternary structure, monomer. Associates with 30S ribosomal subunit, binds 16S rRNA. It depends on Zn(2+) as a cofactor.

It localises to the cytoplasm. One of several proteins that assist in the late maturation steps of the functional core of the 30S ribosomal subunit. Helps release RbfA from mature subunits. May play a role in the assembly of ribosomal proteins into the subunit. Circularly permuted GTPase that catalyzes slow GTP hydrolysis, GTPase activity is stimulated by the 30S ribosomal subunit. The polypeptide is Small ribosomal subunit biogenesis GTPase RsgA (Lactococcus lactis subsp. lactis (strain IL1403) (Streptococcus lactis)).